A 544-amino-acid polypeptide reads, in one-letter code: Chaperonin GroEL (544 aa).

Residues Thr-30–Pro-33, Lys-51, Asp-87–Thr-91, Gly-415, and Asp-495 each bind ATP.

Belongs to the chaperonin (HSP60) family. Forms a cylinder of 14 subunits composed of two heptameric rings stacked back-to-back. Interacts with the co-chaperonin GroES.

The protein resides in the cytoplasm. The enzyme catalyses ATP + H2O + a folded polypeptide = ADP + phosphate + an unfolded polypeptide.. Its function is as follows. Together with its co-chaperonin GroES, plays an essential role in assisting protein folding. The GroEL-GroES system forms a nano-cage that allows encapsulation of the non-native substrate proteins and provides a physical environment optimized to promote and accelerate protein folding. The polypeptide is Chaperonin GroEL (Methylobacillus flagellatus (strain ATCC 51484 / DSM 6875 / VKM B-1610 / KT)).